Here is a 348-residue protein sequence, read N- to C-terminus: PDZ and LIM domain protein 2 (348 aa).

The PDZ domain maps to 1-84; sequence MALTVDVVGP…PLRLQLDRPQ (84 aa). Residues 67-139 form a disordered region; that stretch reads SKIRQSPSPL…PPTSPQAPTG (73 aa). Polar residues predominate over residues 103–118; the sequence is RFQSSRRTHTDSQASL. Ser117, Ser119, and Ser124 each carry phosphoserine. Residues Thr128 and Thr132 each carry the phosphothreonine modification. Ser133, Ser153, Ser191, Ser197, Ser198, Ser202, Ser209, and Ser262 each carry phosphoserine. The tract at residues 165-202 is disordered; it reads GGRRGSRQASLSPAGDSAVLVLPPPPSPGARSSSSRLS. A compositionally biased stretch (low complexity) spans 193–202; the sequence is GARSSSSRLS. Residues 249-275 are disordered; that stretch reads ERGGTPAYLPSSLSPQSSLPTSRALAS. Over residues 257-270 the composition is skewed to low complexity; it reads LPSSLSPQSSLPTS. The region spanning 280 to 340 is the LIM zinc-binding domain; sequence HTCEKCNTSI…EKHARQRYSA (61 aa).

In terms of assembly, interacts with alpha-actinins ACTN1 and ACTN4, FLNA and MYH9. Interacts (via LIM zinc-binding domain) with MKRN2.

The protein localises to the cytoplasm. The protein resides in the cytoskeleton. Probable adapter protein located at the actin cytoskeleton that promotes cell attachment. Necessary for the migratory capacity of epithelial cells. Overexpression enhances cell adhesion to collagen and fibronectin and suppresses anchorage independent growth. May contribute to tumor cell migratory capacity. In Bos taurus (Bovine), this protein is PDZ and LIM domain protein 2 (PDLIM2).